Reading from the N-terminus, the 370-residue chain is Alpha-(1,3)-fucosyltransferase 7 (370 aa).

Topologically, residues 1-36 (MVQGCLCWRGCCDLKTSFPWVTNSRRLWMNCIGCNP) are cytoplasmic. The helical; Signal-anchor for type II membrane protein transmembrane segment at 37 to 59 (VWRLRAWGCLAGGTTLMVIWLFW) threads the bilayer. Residues 60–370 (LLRSVPGGAP…YEDLESWFQA (311 aa)) are Lumenal-facing. An N-linked (GlcNAc...) asparagine glycan is attached at Asn86. An intrachain disulfide couples Cys96 to Cys104. A glycan (N-linked (GlcNAc...) asparagine) is linked at Asn109. The cysteines at positions 239 and 242 are disulfide-linked. An N-linked (GlcNAc...) asparagine glycan is attached at Asn319. Cys346 and Cys349 are disulfide-bonded.

The protein belongs to the glycosyltransferase 10 family. N-glycosylated. As to expression, expressed in lymph node and kidney.

Its subcellular location is the golgi apparatus. The protein resides in the golgi stack membrane. It catalyses the reaction an N-acetyl-alpha-neuraminyl-(2-&gt;3)-beta-D-galactosyl-(1-&gt;4)-N-acetyl-beta-D-glucosaminyl derivative + GDP-beta-L-fucose = an alpha-Neu5Ac-(2-&gt;3)-beta-D-Gal-(1-&gt;4)-[alpha-L-Fuc-(1-&gt;3)]-beta-D-GlcNAc derivative + GDP + H(+). The catalysed reaction is a neolactoside IV(3)-alpha-NeuAc-nLc4Cer + GDP-beta-L-fucose = a neolactoside IV(3)-alpha-NeuNAc,III(3)-alpha-Fuc-nLc4Cer + GDP + H(+). It carries out the reaction a neolactoside VI(3)-alpha-NeuNAc-nLc6Cer + GDP-beta-L-fucose = a neolactoside VI(3)-alpha-NeuAc,V(3)-alphaFuc-nLc6Cer + GDP + H(+). The enzyme catalyses an alpha-Neu5Ac-(2-&gt;3)-beta-D-Gal-(1-&gt;4)-beta-D-GlcNAc-(1-&gt;3)-beta-D-Gal-(1-&gt;4)-[alpha-L-Fuc-(1-&gt;3)]-beta-D-GlcNAc derivative + GDP-beta-L-fucose = an alpha-Neu5Ac-(2-&gt;3)-beta-D-Gal-(1-&gt;4)-[alpha-L-Fuc-(1-&gt;3)]-beta-D-GlcNAc-(1-&gt;3)-beta-D-Gal-(1-&gt;4)-[alpha-L-Fuc-(1-&gt;3)]-beta-D-GlcNAc derivative + GDP + H(+). It catalyses the reaction an alpha-Neu5Ac-(2-&gt;3)-beta-D-Gal-(1-&gt;4)-beta-D-GlcNAc6S derivative + GDP-beta-L-fucose = an alpha-Neu5Ac-(2-&gt;3)-beta-D-Gal-(1-&gt;4)-[alpha-L-Fuc-(1-&gt;3)]-beta-D-GlcNAc6S derivative + GDP + H(+). The catalysed reaction is alpha-Neu5Ac-(2-&gt;3)-beta-D-Gal-(1-&gt;4)-beta-D-GlcNAc-(1-&gt;3)-beta-D-Gal-(1-&gt;4)-D-Glc + GDP-beta-L-fucose = alpha-Neu5Ac-(2-&gt;3)-beta-D-Gal-(1-&gt;4)-[alpha-L-Fuc-(1-&gt;3)]-beta-D-GlcNAc-(1-&gt;3)-beta-D-Gal-(1-&gt;4)-D-Glc + GDP + H(+). It carries out the reaction alpha-Neu5Ac-(2-&gt;3)-beta-D-Gal-(1-&gt;4)-beta-D-GlcNAc-(1-&gt;3)-beta-D-Gal-(1-&gt;4)-[alpha-L-Fuc-(1-&gt;3)]-beta-D-GlcNAc-(1-&gt;3)-beta-D-Gal-(1-&gt;4)-beta-D-GlcNAc + GDP-beta-L-fucose = alpha-Neu5Ac-(2-&gt;3)-beta-D-Gal-(1-&gt;4)-[alpha-L-Fuc-(1-&gt;3)]-beta-D-GlcNAc-(1-&gt;3)-beta-D-Gal-(1-&gt;4)-[alpha-L-Fuc-(1-&gt;3)]-beta-D-GlcNAc-(1-&gt;3)-beta-D-Gal-(1-&gt;4)-beta-D-GlcNAc + GDP + H(+). The enzyme catalyses alpha-Neu5Ac-(2-&gt;3)-beta-D-Gal-(1-&gt;4)-beta-D-GlcNAc-(1-&gt;3)-beta-D-Gal-(1-&gt;4)-beta-D-GlcNAc-(1-&gt;3)-beta-D-Gal-(1-&gt;4)-beta-D-GlcNAc + GDP-beta-L-fucose = alpha-Neu5Ac-(2-&gt;3)-beta-D-Gal-(1-&gt;4)-[alpha-L-Fuc-(1-&gt;3)]-beta-D-GlcNAc-(1-&gt;3)-beta-D-Gal-(1-&gt;4)-beta-D-GlcNAc-(1-&gt;3)-beta-D-Gal-(1-&gt;4)-beta-D-GlcNAc + GDP + H(+). It functions in the pathway protein modification; protein glycosylation. Its activity is regulated as follows. Inhibited by NaCl. Inhibited by GDP in a concentration dependent manner, with an IC(50) value of 93 uM. Also inhibited by GMP and GTP. Inhibited by N-ethylmaleimide. Activated by poly(ethylene glycol) by enhancing the thermal stability of FUT7. Activated by Mn2+, Ca2+, and Mg2+. Both panosialin A and B inhibit activity with IC(50) values of 4.8 and 5.3 ug/ml, respectively. Inhibited by gallic acid (GA) and (-)-epigallocatechin gallate (EGCG) in a time-dependent and irreversible manner with IC(50) values of 60 and 700 nM, respectively. In terms of biological role, catalyzes the transfer of L-fucose, from a guanosine diphosphate-beta-L-fucose, to the N-acetyl glucosamine (GlcNAc) of a distal alpha2,3 sialylated lactosamine unit of a glycoprotein or a glycolipid-linked sialopolylactosamines chain through an alpha-1,3 glycosidic linkage and participates in the final fucosylation step in the biosynthesis of the sialyl Lewis X (sLe(x)), a carbohydrate involved in cell and matrix adhesion during leukocyte trafficking and fertilization. In vitro, also synthesizes sialyl-dimeric-Lex structures, from VIM-2 structures and both di-fucosylated and trifucosylated structures from mono-fucosylated precursors. However does not catalyze alpha 1-3 fucosylation when an internal alpha 1-3 fucosylation is present in polylactosamine chain and the fucosylation rate of the internal GlcNAc residues is reduced once fucose has been added to the distal GlcNAc. Also catalyzes the transfer of a fucose from GDP-beta-fucose to the 6-sulfated a(2,3)sialylated substrate to produce 6-sulfo sLex mediating significant L-selectin-dependent cell adhesion. Through sialyl-Lewis(x) biosynthesis, can control SELE- and SELP-mediated cell adhesion with leukocytes and allows leukocytes tethering and rolling along the endothelial tissue thereby enabling the leukocytes to accumulate at a site of inflammation. May enhance embryo implantation through sialyl Lewis X (sLeX)-mediated adhesion of embryo cells to endometrium. May affect insulin signaling by up-regulating the phosphorylation and expression of some signaling molecules involved in the insulin-signaling pathway through SLe(x) which is present on the glycans of the INSRR alpha subunit. The sequence is that of Alpha-(1,3)-fucosyltransferase 7 from Rattus norvegicus (Rat).